The sequence spans 500 residues: Probable malate:quinone oxidoreductase (500 aa).

It belongs to the MQO family. FAD is required as a cofactor.

It carries out the reaction (S)-malate + a quinone = a quinol + oxaloacetate. It functions in the pathway carbohydrate metabolism; tricarboxylic acid cycle; oxaloacetate from (S)-malate (quinone route): step 1/1. The polypeptide is Probable malate:quinone oxidoreductase (Bacillus mycoides (strain KBAB4) (Bacillus weihenstephanensis)).